Reading from the N-terminus, the 294-residue chain is 33 kDa chaperonin (294 aa).

2 disulfide bridges follow: Cys237–Cys239 and Cys270–Cys273.

It belongs to the HSP33 family. In terms of processing, under oxidizing conditions two disulfide bonds are formed involving the reactive cysteines. Under reducing conditions zinc is bound to the reactive cysteines and the protein is inactive.

The protein localises to the cytoplasm. Functionally, redox regulated molecular chaperone. Protects both thermally unfolding and oxidatively damaged proteins from irreversible aggregation. Plays an important role in the bacterial defense system toward oxidative stress. The polypeptide is 33 kDa chaperonin (Geobacillus kaustophilus (strain HTA426)).